The sequence spans 321 residues: tRNA U34 carboxymethyltransferase (321 aa).

Carboxy-S-adenosyl-L-methionine-binding positions include lysine 90, tryptophan 104, lysine 109, glycine 129, 151-153 (DPT), 180-181 (IE), methionine 195, tyrosine 199, and arginine 314.

The protein belongs to the class I-like SAM-binding methyltransferase superfamily. CmoB family. In terms of assembly, homotetramer.

The catalysed reaction is carboxy-S-adenosyl-L-methionine + 5-hydroxyuridine(34) in tRNA = 5-carboxymethoxyuridine(34) in tRNA + S-adenosyl-L-homocysteine + H(+). Catalyzes carboxymethyl transfer from carboxy-S-adenosyl-L-methionine (Cx-SAM) to 5-hydroxyuridine (ho5U) to form 5-carboxymethoxyuridine (cmo5U) at position 34 in tRNAs. This chain is tRNA U34 carboxymethyltransferase, found in Histophilus somni (strain 2336) (Haemophilus somnus).